The primary structure comprises 200 residues: Dephospho-CoA kinase (200 aa).

The DPCK domain occupies 4–200; the sequence is TIGLTGSVAT…TFIERFVKNK (197 aa). Position 12-17 (12-17) interacts with ATP; sequence ATGKST.

The protein belongs to the CoaE family.

The protein resides in the cytoplasm. It catalyses the reaction 3'-dephospho-CoA + ATP = ADP + CoA + H(+). It participates in cofactor biosynthesis; coenzyme A biosynthesis; CoA from (R)-pantothenate: step 5/5. Its function is as follows. Catalyzes the phosphorylation of the 3'-hydroxyl group of dephosphocoenzyme A to form coenzyme A. The chain is Dephospho-CoA kinase from Listeria monocytogenes serovar 1/2a (strain ATCC BAA-679 / EGD-e).